We begin with the raw amino-acid sequence, 855 residues long: Inactive rhomboid protein 1 (855 aa).

Residues 1-35 (MSEARRDSTSSLQRKKPPWLKLDIPSAAPATAEEP) are disordered. At 1 to 411 (MSEARRDSTS…HRPFFTYWLT (411 aa)) the chain is on the cytoplasmic side. Residues 25-35 (PSAAPATAEEP) show a composition bias toward low complexity. Residues Ser76 and Ser176 each carry the phosphoserine modification. Thr180 and Thr183 each carry phosphothreonine. At Ser390 the chain carries Phosphoserine. A helical membrane pass occupies residues 412 to 432 (FVHSLVTILAVCIYGIAPVGF). Over 433 to 655 (SQHETVDSVL…NPEVPDQFYR (223 aa)) the chain is Lumenal. Residue Asn583 is glycosylated (N-linked (GlcNAc...) asparagine). A helical transmembrane segment spans residues 656 to 676 (LWLSLFLHAGILHCLVSICFQ). Residues 677–691 (MTVLRDLEKLAGWHR) lie on the Cytoplasmic side of the membrane. Residues 692–712 (IAIIYLLSGVTGNLASAIFLP) form a helical membrane-spanning segment. Residues 713–714 (YR) are Lumenal-facing. A helical transmembrane segment spans residues 715 to 735 (AEVGPAGSQFGILACLFVELF). Over 736 to 746 (QSWQILARPWR) the chain is Cytoplasmic. Residues 747–767 (AFFKLLAVVLFLFTFGLLPWI) traverse the membrane as a helical segment. Topologically, residues 768–772 (DNFAH) are lumenal. The chain crosses the membrane as a helical span at residues 773–793 (ISGFISGLFLSFAFLPYISFG). At 794–803 (KFDLYRKRCQ) the chain is on the cytoplasmic side. The helical transmembrane segment at 804 to 824 (IIVFQVVFLGLLAGLVVLFYV) threads the bilayer. Residues 825-855 (YPVRCEWCEFLTCIPFTDKFCEKYELDAQLH) are Lumenal-facing.

This sequence belongs to the peptidase S54 family. As to quaternary structure, homodimer, or homooligomer. Interacts with TGFA and HBEGF. Interacts with EGF; may retain EGF in the endoplasmic reticulum and regulates its degradation through the endoplasmic reticulum-associated degradation (ERAD). Interacts (via cytoplasmic N-terminus) with FRMD8/iTAP; this interaction leads to mutual protein stabilization. Interacts with ADAM17/TACE.

The protein resides in the endoplasmic reticulum membrane. It is found in the golgi apparatus membrane. Functionally, regulates ADAM17 protease, a sheddase of the epidermal growth factor (EGF) receptor ligands and TNF, thereby plays a role in sleep, cell survival, proliferation, migration and inflammation. Does not exhibit any protease activity on its own. This is Inactive rhomboid protein 1 (RHBDF1) from Callithrix jacchus (White-tufted-ear marmoset).